The sequence spans 603 residues: Proline--tRNA ligase (603 aa).

Belongs to the class-II aminoacyl-tRNA synthetase family. ProS type 1 subfamily. As to quaternary structure, homodimer.

The protein localises to the cytoplasm. The enzyme catalyses tRNA(Pro) + L-proline + ATP = L-prolyl-tRNA(Pro) + AMP + diphosphate. In terms of biological role, catalyzes the attachment of proline to tRNA(Pro) in a two-step reaction: proline is first activated by ATP to form Pro-AMP and then transferred to the acceptor end of tRNA(Pro). As ProRS can inadvertently accommodate and process non-cognate amino acids such as alanine and cysteine, to avoid such errors it has two additional distinct editing activities against alanine. One activity is designated as 'pretransfer' editing and involves the tRNA(Pro)-independent hydrolysis of activated Ala-AMP. The other activity is designated 'posttransfer' editing and involves deacylation of mischarged Ala-tRNA(Pro). The misacylated Cys-tRNA(Pro) is not edited by ProRS. This is Proline--tRNA ligase from Prochlorococcus marinus (strain SARG / CCMP1375 / SS120).